A 161-amino-acid polypeptide reads, in one-letter code: MPSFDIVSEIDRHELTNSVDQANRELEMRYDFRGVEASFTLSEKSVEMAAEQEFQLEQMLLILNTTLSKRKVDLRVLGDSTDQKSGKQVKRSYALKEGLEQKVAKDIVKKIKESKMKVQASIQGDQVRITGKKRDDLQEAIQLLRGDESLDVPMQFNNFRD.

It belongs to the YajQ family.

Its function is as follows. Nucleotide-binding protein. This Hahella chejuensis (strain KCTC 2396) protein is Nucleotide-binding protein HCH_04620.